A 335-amino-acid chain; its full sequence is Methionine import ATP-binding protein MetN 1 (335 aa).

The ABC transporter domain maps to 2–242; that stretch reads IEFQQVHKTY…PQHPTTKRFV (241 aa). ATP is bound at residue 38-45; it reads GHSGAGKS.

Belongs to the ABC transporter superfamily. Methionine importer (TC 3.A.1.24) family. As to quaternary structure, the complex is composed of two ATP-binding proteins (MetN), two transmembrane proteins (MetI) and a solute-binding protein (MetQ).

It localises to the cell inner membrane. It catalyses the reaction L-methionine(out) + ATP + H2O = L-methionine(in) + ADP + phosphate + H(+). It carries out the reaction D-methionine(out) + ATP + H2O = D-methionine(in) + ADP + phosphate + H(+). Its function is as follows. Part of the ABC transporter complex MetNIQ involved in methionine import. Responsible for energy coupling to the transport system. The polypeptide is Methionine import ATP-binding protein MetN 1 (Pseudomonas putida (strain ATCC 47054 / DSM 6125 / CFBP 8728 / NCIMB 11950 / KT2440)).